An 84-amino-acid polypeptide reads, in one-letter code: Small ribosomal subunit protein uS17 (84 aa).

The protein belongs to the universal ribosomal protein uS17 family. In terms of assembly, part of the 30S ribosomal subunit.

One of the primary rRNA binding proteins, it binds specifically to the 5'-end of 16S ribosomal RNA. The protein is Small ribosomal subunit protein uS17 of Caldanaerobacter subterraneus subsp. tengcongensis (strain DSM 15242 / JCM 11007 / NBRC 100824 / MB4) (Thermoanaerobacter tengcongensis).